A 280-amino-acid polypeptide reads, in one-letter code: MTPILAAEALTYAFPGGVKALDDLSLAVPQGESLAILGPNGAGKSTLLLHLNGTLRPQSGRVLLGGTATGHSRKDLTDWRRRVGLVLQDADDQLFAATVFEDVSFGPLNLGLSEAEARARVEEALAALSISDLRDRPTHMLSGGQKRRVAIAGAVAMRPEVLLLDEPTAGLDLAGTEQLLTLLHGLRAAGMTLVFSTHDVELAAALADRVALFRTGRVLAEGAAAAVLSDRATLAQGGLRPPLVIDLALSRARSRPFGPRSALPRTRDALAAQMAGWTRR.

In terms of domain architecture, ABC transporter spans 5-240 (LAAEALTYAF…RATLAQGGLR (236 aa)). 38–45 (GPNGAGKS) is an ATP binding site.

The protein belongs to the ABC transporter superfamily. As to quaternary structure, forms an energy-coupling factor (ECF) transporter complex composed of an ATP-binding protein (A component, CbiO), a transmembrane protein (T component, CbiQ) and 2 possible substrate-capture proteins (S components, CbiM and CbiN) of unknown stoichimetry. Subcomplexes composed of CbiMQO can be isolated from membranes but the CbiN subunit is not isolated in association with them, suggesting it is only loosely associated. Expression of just CbiMN in E.coli confers some cobalt uptake.

It localises to the cell inner membrane. Its pathway is cofactor biosynthesis; adenosylcobalamin biosynthesis. Part of the energy-coupling factor (ECF) transporter complex CbiMNOQ involved in cobalt import. The complex confers cobalt uptake upon expression in E.coli; can also transport nickel with a very low affinity. Presumably responsible for energy coupling to the transport system. The sequence is that of Cobalt import ATP-binding protein CbiO (cbiO) from Rhodobacter capsulatus (strain ATCC BAA-309 / NBRC 16581 / SB1003).